Reading from the N-terminus, the 318-residue chain is Putative HTH-type transcriptional regulatory protein MJ1164 (318 aa).

The region spanning 131-189 is the HTH cro/C1-type domain; that stretch reads LKEVREAMGISVGKLAEVAGVSRKAIYKYETQMANPSVDVALKIEEFLDVPLVKGIDLF. Residues 142 to 161 constitute a DNA-binding region (H-T-H motif); sequence VGKLAEVAGVSRKAIYKYET.

This Methanocaldococcus jannaschii (strain ATCC 43067 / DSM 2661 / JAL-1 / JCM 10045 / NBRC 100440) (Methanococcus jannaschii) protein is Putative HTH-type transcriptional regulatory protein MJ1164.